The primary structure comprises 101 residues: Small ribosomal subunit protein uS14 (101 aa).

The protein belongs to the universal ribosomal protein uS14 family. Part of the 30S ribosomal subunit. Contacts proteins S3 and S10.

In terms of biological role, binds 16S rRNA, required for the assembly of 30S particles and may also be responsible for determining the conformation of the 16S rRNA at the A site. In Zymomonas mobilis subsp. mobilis (strain ATCC 31821 / ZM4 / CP4), this protein is Small ribosomal subunit protein uS14.